The following is a 233-amino-acid chain: Homeobox protein ceh-30 (233 aa).

Residues 50–85 are compositionally biased toward polar residues; it reads NNSTYSHDLDPSPQSVRSDLSTSPRASSPDRNSPMS. Disordered regions lie at residues 50-93 and 206-233; these read NNST…KART and FQATSSSNSPSTHKSSESPQLDVSSNSD. Residues 88-147 constitute a DNA-binding region (homeobox); sequence SRKARTIFTDKQLQELENTFEKQKYLSVQDRMDLAHRMGLSDTQVKTWYQNRRTKWKRQA. The span at 224–233 shows a compositional bias: polar residues; the sequence is PQLDVSSNSD.

Its subcellular location is the nucleus. In terms of biological role, cell-type specific anti-apoptotic transcription factor required for the sexually dimorphic survival of the male-specific CEM (cephalic male) sensory neurons during sex determination. In hermaphrodites, the homologous cells undergo programmed cell death due to transcriptional repression of ceh-30 by tra-1, the terminal regulator in the sex determination pathway. The protein is Homeobox protein ceh-30 of Caenorhabditis briggsae.